The following is a 494-amino-acid chain: Neuronal acetylcholine receptor subunit alpha-6 (494 aa).

The signal sequence occupies residues 1–30 (MLNSRDQGNLHSGLCLWLCGFLALFKGSTG). At 31–240 (CESEEQLFHR…TYSFYIRRLP (210 aa)) the chain is on the extracellular side. Asn-54 and Asn-171 each carry an N-linked (GlcNAc...) asparagine glycan. Intrachain disulfides connect Cys-158/Cys-172 and Cys-222/Cys-223. 3 helical membrane passes run 241–265 (MFYTINLIIPCLFISFLTVLVFYLP), 272–290 (VTLCISVLLSLTVFLLVIT), and 306–327 (YLLFTMIFVTLSIVVTVFVLNI). Topologically, residues 328–465 (HYRTPATHTM…WKYMAMVVDR (138 aa)) are cytoplasmic. The disordered stretch occupies residues 399-423 (QKSSDIAPGKRRSSQQPARWVAENS). Ser-401 carries the phosphoserine modification. Residues 466 to 485 (VFLWVFIIVCVFGTVGLFLQ) form a helical membrane-spanning segment.

Belongs to the ligand-gated ion channel (TC 1.A.9) family. Acetylcholine receptor (TC 1.A.9.1) subfamily. Alpha-6/CHRNA6 sub-subfamily. In terms of assembly, neuronal AChR is composed of two different types of subunits: alpha and non-alpha (beta). CHRNA6/alpha-6 subunit can be combined to CHRNB2/beta-2 and CHRNA4/alpha-4 to give rise to functional receptors. Interacts with LYPD6. In terms of tissue distribution, predominantly expressed in only a few brain areas, including dopaminergic neurons, norepirephrine neurons and cells of the visual system.

The protein localises to the synaptic cell membrane. The catalysed reaction is K(+)(in) = K(+)(out). It catalyses the reaction Na(+)(in) = Na(+)(out). It carries out the reaction Ca(2+)(in) = Ca(2+)(out). Its activity is regulated as follows. Activated by a myriad of ligands such as acetylcholine, cytisine and nicotine. CHRNA6 nAChR activity is inhibited by the antagonists alpha-conotoxin MII and PIA, a small disulfide-constrained peptides from cone snails. Component of neuronal acetylcholine receptors (nAChRs) that function as pentameric, ligand-gated cation channels with high calcium permeability among other activities. nAChRs are excitatory neurotrasnmitter receptors formed by a collection of nAChR subunits known to mediate synaptic transmission in the nervous system and the neuromuscular junction. Each nAchR subunit confers differential attributes to channel properties, including activation, deactivation and desensitization kinetics, pH sensitivity, cation permeability, and binding to allosteric modulators. CHRNA6 forms pentameric channels with CHRNB2 and CHRNA4 that exhibit high sensitivity to ACh and nicotine and are predominantly expressed in only a few brain areas, including dopaminergic neurons, norepirephrine neurons and cells of the visual system. nAChrs containing CHRNA6 subunits mediate endogenous cholinergic modulation of dopamine and gamma-aminobutyric acid (GABA) release in response to nicotine at nerve terminals. This chain is Neuronal acetylcholine receptor subunit alpha-6 (Chrna6), found in Mus musculus (Mouse).